Here is a 1165-residue protein sequence, read N- to C-terminus: DNA-directed RNA polymerase subunit beta' (1165 aa).

Zn(2+) is bound by residues C60, C62, C75, and C78. Mg(2+)-binding residues include D449, D451, and D453. Zn(2+) contacts are provided by C794, C868, C875, and C878.

This sequence belongs to the RNA polymerase beta' chain family. In terms of assembly, the RNAP catalytic core consists of 2 alpha, 1 beta, 1 beta' and 1 omega subunit. When a sigma factor is associated with the core the holoenzyme is formed, which can initiate transcription. It depends on Mg(2+) as a cofactor. Zn(2+) serves as cofactor.

It catalyses the reaction RNA(n) + a ribonucleoside 5'-triphosphate = RNA(n+1) + diphosphate. Functionally, DNA-dependent RNA polymerase catalyzes the transcription of DNA into RNA using the four ribonucleoside triphosphates as substrates. The protein is DNA-directed RNA polymerase subunit beta' of Acetivibrio thermocellus (strain ATCC 27405 / DSM 1237 / JCM 9322 / NBRC 103400 / NCIMB 10682 / NRRL B-4536 / VPI 7372) (Clostridium thermocellum).